The following is a 248-amino-acid chain: Tetraspanin-18 (248 aa).

The Cytoplasmic portion of the chain corresponds to 1–13; the sequence is MEGDCLSCMKYLM. Residues 14–34 form a helical membrane-spanning segment; the sequence is FVFNFFIFLGGACLLAIGIWV. The Extracellular segment spans residues 35-49; that stretch reads MVDPTGFREIVAANP. The chain crosses the membrane as a helical span at residues 50–70; the sequence is LLLTGAYILLAMGGLLFLLGF. Residues 71 to 83 are Cytoplasmic-facing; that stretch reads LGCCGAVRENKCL. Residues 84-104 form a helical membrane-spanning segment; it reads LLFFFLFILIIFLAELSAAIL. Residues 105–223 lie on the Extracellular side of the membrane; that stretch reads AFIFRENLTR…TFETYVYLAG (119 aa). Residues Asn-111 and Asn-129 are each glycosylated (N-linked (GlcNAc...) asparagine). Residues 224 to 244 form a helical membrane-spanning segment; sequence ALAIGVLAIELFAMIFAMCLF. The Cytoplasmic segment spans residues 245-248; the sequence is RGIQ.

It belongs to the tetraspanin (TM4SF) family. In terms of assembly, interacts with ORAI1; this interaction regulates ORAI1 exit from the endoplasmic (ER), and/or Golgi, and trafficking to the cell surface. In terms of tissue distribution, highly expressed in primary endothelial cells. Expressed in the embryo heart. Weakly expressed the embryo skeletal muscle.

It localises to the membrane. Its function is as follows. Plays a role in the cell surface localization of ORAI1 and may participate in the regulation of Ca(2+) signaling and the VWF release in response to inflammatory stimuli. This Homo sapiens (Human) protein is Tetraspanin-18.